We begin with the raw amino-acid sequence, 290 residues long: Lipoyl synthase (290 aa).

Residues cysteine 32, cysteine 37, cysteine 43, cysteine 58, cysteine 62, cysteine 65, and serine 272 each coordinate [4Fe-4S] cluster. A Radical SAM core domain is found at 44-261 (WGEGTATFMI…KEVAVSLGFK (218 aa)).

Belongs to the radical SAM superfamily. Lipoyl synthase family. It depends on [4Fe-4S] cluster as a cofactor.

The protein resides in the cytoplasm. It catalyses the reaction [[Fe-S] cluster scaffold protein carrying a second [4Fe-4S](2+) cluster] + N(6)-octanoyl-L-lysyl-[protein] + 2 oxidized [2Fe-2S]-[ferredoxin] + 2 S-adenosyl-L-methionine + 4 H(+) = [[Fe-S] cluster scaffold protein] + N(6)-[(R)-dihydrolipoyl]-L-lysyl-[protein] + 4 Fe(3+) + 2 hydrogen sulfide + 2 5'-deoxyadenosine + 2 L-methionine + 2 reduced [2Fe-2S]-[ferredoxin]. Its pathway is protein modification; protein lipoylation via endogenous pathway; protein N(6)-(lipoyl)lysine from octanoyl-[acyl-carrier-protein]: step 2/2. In terms of biological role, catalyzes the radical-mediated insertion of two sulfur atoms into the C-6 and C-8 positions of the octanoyl moiety bound to the lipoyl domains of lipoate-dependent enzymes, thereby converting the octanoylated domains into lipoylated derivatives. This chain is Lipoyl synthase, found in Pyrobaculum aerophilum (strain ATCC 51768 / DSM 7523 / JCM 9630 / CIP 104966 / NBRC 100827 / IM2).